Consider the following 425-residue polypeptide: Inner membrane protein YqcE (425 aa).

At 1-8 (MQHNSYRR) the chain is on the cytoplasmic side. A helical transmembrane segment spans residues 9-29 (WITLAIISFSGGVSFDLAYLR). Residues 30–48 (YIYQIPMAKFMGFSNTEIG) are Periplasmic-facing. A helical transmembrane segment spans residues 49-69 (LIMSTFGIAAIILYAPSGVIA). The Cytoplasmic portion of the chain corresponds to 70-75 (DKFSHR). 2 helical membrane passes run 76–96 (KMIT…ATYP) and 97–117 (PLWV…LMLW). Over 118-138 (SVSIKAASLLGDHSEQGKIMG) the chain is Cytoplasmic. The helical transmembrane segment at 139-159 (WMEGLRGVGVMSLAVFTMWVF) threads the bilayer. At 160 to 171 (SRFAPDDSTSLK) the chain is on the periplasmic side. A helical membrane pass occupies residues 172-192 (TVIIIYSVVYILLGILCWFFV). The Cytoplasmic portion of the chain corresponds to 193-219 (SDNNNLRSANNEEKQSFQLSDILAVLR). Residues 220–240 (ISTTWYCSMVIFGVFTIYAIL) form a helical membrane-spanning segment. Over 241–259 (SYSTNYLTEMYGMSLVAAS) the chain is Periplasmic. Residues 260 to 280 (YMGIVINKIFRALCGPLGGII) form a helical membrane-spanning segment. Topologically, residues 281 to 291 (TTYSKVKSPTR) are cytoplasmic. A helical transmembrane segment spans residues 292–312 (VIQILSVLGLLTLTALLVTNS). Asn-313 is a topological domain (periplasmic). A helical membrane pass occupies residues 314–334 (PQSVAMGIGLILLLGFTCYAS). Residues 335 to 354 (RGLYWACPGEARTPSYIMGT) are Cytoplasmic-facing. The helical transmembrane segment at 355-375 (TVGICSVIGFLPDVFVYPIIG) threads the bilayer. At 376–388 (HWQDTLPAAEAYR) the chain is on the periplasmic side. Residues 389-409 (NMWLMGMAALGMVIVFTFLLF) form a helical membrane-spanning segment. The Cytoplasmic segment spans residues 410–425 (QKIRTADSAPAMASSK).

This sequence to E.coli YihN.

The protein localises to the cell inner membrane. This chain is Inner membrane protein YqcE (yqcE), found in Escherichia coli (strain K12).